Reading from the N-terminus, the 224-residue chain is Urease accessory protein UreF (224 aa).

The protein belongs to the UreF family. UreD, UreF and UreG form a complex that acts as a GTP-hydrolysis-dependent molecular chaperone, activating the urease apoprotein by helping to assemble the nickel containing metallocenter of UreC. The UreE protein probably delivers the nickel.

It localises to the cytoplasm. In terms of biological role, required for maturation of urease via the functional incorporation of the urease nickel metallocenter. This Pseudomonas putida (strain ATCC 47054 / DSM 6125 / CFBP 8728 / NCIMB 11950 / KT2440) protein is Urease accessory protein UreF.